The chain runs to 1310 residues: Contactin-associated protein-like 4 (1310 aa).

A signal peptide spans 1-27 (MNMGSVAGAVLKMLLLLSTQNWNRVEA). Over 28-1243 (GNSYDCDEPL…LTHAIKSDSA (1216 aa)) the chain is Extracellular. The region spanning 33 to 179 (CDEPLVSALP…IGMRIEVFGC (147 aa)) is the F5/8 type C domain. A disulfide bridge connects residues cysteine 33 and cysteine 179. The region spanning 214–346 (FKTMESDGIL…NLFYNGVDVI (133 aa)) is the Laminin G-like 1 domain. Asparagine 262, asparagine 287, and asparagine 361 each carry an N-linked (GlcNAc...) asparagine glycan. Intrachain disulfides connect cysteine 334–cysteine 366, cysteine 517–cysteine 549, cysteine 555–cysteine 566, and cysteine 560–cysteine 575. Residues 400–529 (FRTWNKAGLL…LISINNKMVD (130 aa)) enclose the Laminin G-like 2 domain. A glycan (N-linked (GlcNAc...) asparagine) is linked at asparagine 540. An EGF-like 1 domain is found at 551–588 (ISDRCLPNSCEHGGECSQSWSTFHCNCTNTGYTGATCH). N-linked (GlcNAc...) asparagine glycosylation occurs at asparagine 576. Residues cysteine 577 and cysteine 587 are joined by a disulfide bond. Positions 589 to 794 (SSVYEQSCEA…LLCRGDRPFW (206 aa)) constitute a Fibrinogen C-terminal domain. Residues asparagine 604, asparagine 627, asparagine 639, asparagine 708, and asparagine 750 are each glycosylated (N-linked (GlcNAc...) asparagine). Residues 795 to 960 (NAASFNTEAS…TVTPGVQPGC (166 aa)) enclose the Laminin G-like 3 domain. Disulfide bonds link cysteine 933–cysteine 960, cysteine 964–cysteine 977, cysteine 971–cysteine 986, and cysteine 988–cysteine 998. Residues 960 to 999 (CRGHCGSYGKLCRHGGKCREKPSGFFCDCSSSAYAGPFCS) form the EGF-like 2 domain. Residues asparagine 1019, asparagine 1025, and asparagine 1075 are each glycosylated (N-linked (GlcNAc...) asparagine). The Laminin G-like 4 domain occupies 1048–1204 (FRTTRAPSLL…VTGHVTESSC (157 aa)). Cysteines 1169 and 1204 form a disulfide. The chain crosses the membrane as a helical span at residues 1244–1264 (VIGGLIAVVIFILLCVSAIAV). At 1265-1310 (RIYQQKRLYKRNEAKRSENVDSAEAVLKSELHIQNAVGENQKEYFF) the chain is on the cytoplasmic side.

The protein belongs to the neurexin family. Interacts with TIAM1. As to expression, specifically present in developing cortical interneurons: highly expressed in cortical parvalbumin (PV) cells and midbrain dopaminergic neurons and is localized presynaptically (at protein level). Also present in the substantia nigra pars compacta (SnC) and ventral tegmental area (VTA) midbrain dopaminergic projection populations.

The protein localises to the presynaptic cell membrane. Functionally, presynaptic protein involved in both dopaminergic synaptic transmission and GABAergic system, thereby participating in the structural maturation of inhibitory interneuron synapses. Involved in the dopaminergic synaptic transmission by attenuating dopamine release through a presynaptic mechanism. Also participates in the GABAergic system. In Mus musculus (Mouse), this protein is Contactin-associated protein-like 4 (Cntnap4).